A 185-amino-acid polypeptide reads, in one-letter code: Threonylcarbamoyl-AMP synthase (185 aa).

Positions 4 to 185 (SFRVQQAARE…LATGEVVRPG (182 aa)) constitute a YrdC-like domain.

The protein belongs to the SUA5 family. TsaC subfamily.

It is found in the cytoplasm. It catalyses the reaction L-threonine + hydrogencarbonate + ATP = L-threonylcarbamoyladenylate + diphosphate + H2O. In terms of biological role, required for the formation of a threonylcarbamoyl group on adenosine at position 37 (t(6)A37) in tRNAs that read codons beginning with adenine. Catalyzes the conversion of L-threonine, HCO(3)(-)/CO(2) and ATP to give threonylcarbamoyl-AMP (TC-AMP) as the acyladenylate intermediate, with the release of diphosphate. The protein is Threonylcarbamoyl-AMP synthase of Pseudomonas putida (strain ATCC 700007 / DSM 6899 / JCM 31910 / BCRC 17059 / LMG 24140 / F1).